Consider the following 243-residue polypeptide: Venom protease (243 aa).

The 243-residue stretch at 1 to 243 folds into the Peptidase S1 domain; it reads VVGGKPAKLG…DSFILPALKK (243 aa). Cys34 and Cys50 form a disulfide bridge. Residues His49 and Asp97 each act as charge relay system in the active site. Disulfide bonds link Cys165–Cys178 and Cys189–Cys217. The active-site Charge relay system is the Ser193.

This sequence belongs to the peptidase S1 family. Expressed by the venom duct.

Its subcellular location is the secreted. The protein is Venom protease of Bombus pensylvanicus (American bumblebee).